The primary structure comprises 89 residues: Meiosis expressed gene 1 protein homolog (89 aa).

It belongs to the MEIG1 family.

The protein is Meiosis expressed gene 1 protein homolog of Nematostella vectensis (Starlet sea anemone).